The chain runs to 499 residues: Cytochrome P450 ARB_01131 (499 aa).

Residues 1–21 (MLSLIVACLVLPLICYKLVRS) form the signal peptide. Residue asparagine 23 is glycosylated (N-linked (GlcNAc...) asparagine). Cysteine 437 contributes to the heme binding site.

Belongs to the cytochrome P450 family. Heme serves as cofactor.

In terms of biological role, together with an NADPH cytochrome P450 the enzyme system catalyzes the terminal hydroxylation as the first step in the assimilation of alkanes and fatty acids. The sequence is that of Cytochrome P450 ARB_01131 from Arthroderma benhamiae (strain ATCC MYA-4681 / CBS 112371) (Trichophyton mentagrophytes).